The following is a 459-amino-acid chain: Bifunctional protein GlmU (459 aa).

Residues 1–229 are pyrophosphorylase; the sequence is MSNFAIILAA…FDESLGVNDR (229 aa). UDP-N-acetyl-alpha-D-glucosamine is bound by residues 8–11, lysine 22, glutamine 72, and 77–78; these read LAAG and GT. Residue aspartate 102 participates in Mg(2+) binding. Residues glycine 139, glutamate 154, asparagine 169, and asparagine 227 each coordinate UDP-N-acetyl-alpha-D-glucosamine. A Mg(2+)-binding site is contributed by asparagine 227. The tract at residues 230–250 is linker; that stretch reads VALATAESVMRRRINHKHMVN. Residues 251 to 459 form an N-acetyltransferase region; that stretch reads GVSFVNPEAT…TRLPHHPKNQ (209 aa). UDP-N-acetyl-alpha-D-glucosamine-binding residues include arginine 332 and lysine 350. The active-site Proton acceptor is the histidine 362. UDP-N-acetyl-alpha-D-glucosamine is bound by residues tyrosine 365 and asparagine 376. Acetyl-CoA is bound by residues alanine 379, 385 to 386, serine 404, alanine 422, and arginine 439; that span reads NY.

The protein in the N-terminal section; belongs to the N-acetylglucosamine-1-phosphate uridyltransferase family. In the C-terminal section; belongs to the transferase hexapeptide repeat family. Homotrimer. It depends on Mg(2+) as a cofactor.

The protein resides in the cytoplasm. The enzyme catalyses alpha-D-glucosamine 1-phosphate + acetyl-CoA = N-acetyl-alpha-D-glucosamine 1-phosphate + CoA + H(+). It carries out the reaction N-acetyl-alpha-D-glucosamine 1-phosphate + UTP + H(+) = UDP-N-acetyl-alpha-D-glucosamine + diphosphate. It functions in the pathway nucleotide-sugar biosynthesis; UDP-N-acetyl-alpha-D-glucosamine biosynthesis; N-acetyl-alpha-D-glucosamine 1-phosphate from alpha-D-glucosamine 6-phosphate (route II): step 2/2. The protein operates within nucleotide-sugar biosynthesis; UDP-N-acetyl-alpha-D-glucosamine biosynthesis; UDP-N-acetyl-alpha-D-glucosamine from N-acetyl-alpha-D-glucosamine 1-phosphate: step 1/1. Its pathway is bacterial outer membrane biogenesis; LPS lipid A biosynthesis. Functionally, catalyzes the last two sequential reactions in the de novo biosynthetic pathway for UDP-N-acetylglucosamine (UDP-GlcNAc). The C-terminal domain catalyzes the transfer of acetyl group from acetyl coenzyme A to glucosamine-1-phosphate (GlcN-1-P) to produce N-acetylglucosamine-1-phosphate (GlcNAc-1-P), which is converted into UDP-GlcNAc by the transfer of uridine 5-monophosphate (from uridine 5-triphosphate), a reaction catalyzed by the N-terminal domain. The protein is Bifunctional protein GlmU of Streptococcus pneumoniae (strain 70585).